The following is a 566-amino-acid chain: Pyrophosphate--fructose 6-phosphate 1-phosphotransferase subunit beta 1 (566 aa).

Ser16 carries the post-translational modification Phosphoserine. Gly105 provides a ligand contact to diphosphate. Asp199 contributes to the Mg(2+) binding site. Residues Thr227–Asp229, Lys266–Tyr267, Met274–Arg276, Glu335, and Tyr440–Arg443 each bind substrate. Catalysis depends on Asp229, which acts as the Proton acceptor.

It belongs to the phosphofructokinase type A (PFKA) family. PPi-dependent PFK group II subfamily. Clade 'Long' sub-subfamily. In terms of assembly, tetramer of two alpha (regulatory) and two beta (catalytic) chains. Mg(2+) is required as a cofactor.

It localises to the cytoplasm. The enzyme catalyses beta-D-fructose 6-phosphate + diphosphate = beta-D-fructose 1,6-bisphosphate + phosphate + H(+). The protein operates within carbohydrate degradation; glycolysis; D-glyceraldehyde 3-phosphate and glycerone phosphate from D-glucose: step 3/4. Its activity is regulated as follows. Allosterically activated by fructose 2,6-bisphosphate. In terms of biological role, catalytic subunit of pyrophosphate--fructose 6-phosphate 1-phosphotransferase. Catalyzes the phosphorylation of D-fructose 6-phosphate, the first committing step of glycolysis. Uses inorganic phosphate (PPi) as phosphoryl donor instead of ATP like common ATP-dependent phosphofructokinases (ATP-PFKs), which renders the reaction reversible, and can thus function both in glycolysis and gluconeogenesis. The polypeptide is Pyrophosphate--fructose 6-phosphate 1-phosphotransferase subunit beta 1 (Arabidopsis thaliana (Mouse-ear cress)).